The chain runs to 340 residues: MSQSDLHQQKFHWQGRHDAEDGKLGQRIHHVVKHQKTSELEKASQGVSILGFATDAGVARNKGRIGAKKAPDLIRRALANLAWHKDAPLYDLGTVVCDDDLLEESQSRCANLISEALPHTPTIVLGGGHEIAWASFSGLAEYFKTHHPEKKPKIGIINFDAHFDLRAFESSLADVKPSSGTPFNQIHHFCQRNDWAFHYACLGVSRSSNTQALFQKADELNVWYVEDSQLNYLNHSYHLTQLQHFIDDCDYLYLTIDLDVFPAATAPGVSAPAARGVSYDTIAPFLERILHYKNKLMLADIAEYNPNYDVDSQTARLAARLCWDIANAMADKEHKRQPIK.

The Mn(2+) site is built by His129, Asp160, His162, Asp164, Asp257, and Asp259.

This sequence belongs to the arginase family. Mn(2+) is required as a cofactor.

The enzyme catalyses N-formimidoyl-L-glutamate + H2O = formamide + L-glutamate. It participates in amino-acid degradation; L-histidine degradation into L-glutamate; L-glutamate from N-formimidoyl-L-glutamate (hydrolase route): step 1/1. Functionally, catalyzes the conversion of N-formimidoyl-L-glutamate to L-glutamate and formamide. This chain is Formimidoylglutamase, found in Vibrio parahaemolyticus serotype O3:K6 (strain RIMD 2210633).